Consider the following 155-residue polypeptide: Arginine repressor (155 aa).

It belongs to the ArgR family.

It localises to the cytoplasm. It functions in the pathway amino-acid biosynthesis; L-arginine biosynthesis [regulation]. Regulates arginine biosynthesis genes. The sequence is that of Arginine repressor from Histophilus somni (strain 2336) (Haemophilus somnus).